The primary structure comprises 310 residues: 2-ketogluconate reductase (310 aa).

NADP(+) contacts are provided by residues 151 to 152 (HI) and 227 to 229 (IAR). Catalysis depends on residues Arg-229 and Glu-258. The active-site Proton donor is His-276.

This sequence belongs to the D-isomer specific 2-hydroxyacid dehydrogenase family. As to quaternary structure, homohexamer.

It carries out the reaction D-gluconate + NADP(+) = 2-dehydro-D-gluconate + NADPH + H(+). Catalyzes the reduction of 2-keto-D-gluconate to gluconate. Can also catalyze the reduction of 2-keto-L-gulonate. Can use both NADH and NADPH efficiently, with a slight preference for NADPH. This is 2-ketogluconate reductase from Gluconobacter oxydans (strain 621H) (Gluconobacter suboxydans).